Here is a 156-residue protein sequence, read N- to C-terminus: Small ribosomal subunit protein uS7 (156 aa).

The protein belongs to the universal ribosomal protein uS7 family. As to quaternary structure, part of the 30S ribosomal subunit. Contacts proteins S9 and S11.

Its function is as follows. One of the primary rRNA binding proteins, it binds directly to 16S rRNA where it nucleates assembly of the head domain of the 30S subunit. Is located at the subunit interface close to the decoding center, probably blocks exit of the E-site tRNA. In Cutibacterium acnes (strain DSM 16379 / KPA171202) (Propionibacterium acnes), this protein is Small ribosomal subunit protein uS7.